The following is a 136-amino-acid chain: Large ribosomal subunit protein eL27 (136 aa).

The KOW domain occupies 5–40; sequence MKPGKVVMVLAGRYAGRKAVIVKNIDDGTADRPYSH.

The protein belongs to the eukaryotic ribosomal protein eL27 family. Component of the large ribosomal subunit.

The protein localises to the cytoplasm. The protein resides in the cytosol. Its subcellular location is the rough endoplasmic reticulum. Functionally, component of the large ribosomal subunit. The sequence is that of Large ribosomal subunit protein eL27 (rpl27) from Ictalurus punctatus (Channel catfish).